A 382-amino-acid polypeptide reads, in one-letter code: Mannitol-1-phosphate 5-dehydrogenase (382 aa).

An NAD(+)-binding site is contributed by 3-14 (ALHFGAGNIGRG).

It belongs to the mannitol dehydrogenase family.

It carries out the reaction D-mannitol 1-phosphate + NAD(+) = beta-D-fructose 6-phosphate + NADH + H(+). This Cronobacter sakazakii (strain ATCC BAA-894) (Enterobacter sakazakii) protein is Mannitol-1-phosphate 5-dehydrogenase.